A 189-amino-acid polypeptide reads, in one-letter code: UPF0200 protein Smar_1234 (189 aa).

10–17 (GMPGAGKS) serves as a coordination point for ATP.

It belongs to the UPF0200 family.

This is UPF0200 protein Smar_1234 from Staphylothermus marinus (strain ATCC 43588 / DSM 3639 / JCM 9404 / F1).